Here is a 361-residue protein sequence, read N- to C-terminus: Phosphoserine aminotransferase (361 aa).

Arg43 is an L-glutamate binding site. Pyridoxal 5'-phosphate contacts are provided by residues 77–78, Trp103, Thr153, Asp173, and Gln196; that span reads AS. Lys197 bears the N6-(pyridoxal phosphate)lysine mark. 238–239 provides a ligand contact to pyridoxal 5'-phosphate; that stretch reads NT.

The protein belongs to the class-V pyridoxal-phosphate-dependent aminotransferase family. SerC subfamily. Homodimer. Pyridoxal 5'-phosphate serves as cofactor.

The protein localises to the cytoplasm. The catalysed reaction is O-phospho-L-serine + 2-oxoglutarate = 3-phosphooxypyruvate + L-glutamate. It carries out the reaction 4-(phosphooxy)-L-threonine + 2-oxoglutarate = (R)-3-hydroxy-2-oxo-4-phosphooxybutanoate + L-glutamate. It participates in amino-acid biosynthesis; L-serine biosynthesis; L-serine from 3-phospho-D-glycerate: step 2/3. It functions in the pathway cofactor biosynthesis; pyridoxine 5'-phosphate biosynthesis; pyridoxine 5'-phosphate from D-erythrose 4-phosphate: step 3/5. Functionally, catalyzes the reversible conversion of 3-phosphohydroxypyruvate to phosphoserine and of 3-hydroxy-2-oxo-4-phosphonooxybutanoate to phosphohydroxythreonine. The protein is Phosphoserine aminotransferase of Pseudomonas fluorescens (strain SBW25).